A 601-amino-acid chain; its full sequence is MTHTESTFSFLGLNPFIIKSLSKMGYVKPSPIQAACIPLLLEGRDVLGMAQTGSGKTAAFSLPLLHNLNINLKAPQILVLAPTRELAVQVAEAFSDFSKYIMGIHVLPLYGGQRYEVQLRALRQGPQIVVGTPGRLLDHLKRGTLNLSNLYALVLDEADEMLRMGFIEDVETIMSQIPKEHQTALFSATMPEAIRRISKRFMKNPQEIKIQSNITTRPDIKQSYWMVYGRKTDALIRFLEVEDFSATIIFVKTKNATLEVSEALERNGYNSAALNGDMNQALREQTLERLKSGRLDILIATDVAARGLDVDRISFVINYDIPMDSESYVHRIGRTGRAGRAGRALLFVENRERRLLRNIERTINQTIPEVQLPKIEVLCKRRLERFAKKVQEQLESRDLDEYSALLDKLYSPDDLDIKTLASALLKMAQGGRPLIIKKDLLQRPSREFSFKDDRRREDNHRNNNRNRRERRELKDIDLYRIEAGRNDGVEVRHIVGAIANEGNINSRNIGNIKLFSSYAIVELPKGLSKDLLQRLIKTKILNKKINIKLLRDIKNYETRTHNRSIFNKDKNNKRRFSDNRLNKSSSIKNETKSSFFRRKSV.

The short motif at 6-34 (STFSFLGLNPFIIKSLSKMGYVKPSPIQA) is the Q motif element. In terms of domain architecture, Helicase ATP-binding spans 37–208 (IPLLLEGRDV…KRFMKNPQEI (172 aa)). 50–57 (AQTGSGKT) serves as a coordination point for ATP. Residues 156–159 (DEAD) carry the DEAD box motif. The region spanning 231–378 (KTDALIRFLE…EVQLPKIEVL (148 aa)) is the Helicase C-terminal domain. Residues 564-581 (SIFNKDKNNKRRFSDNRL) are compositionally biased toward basic and acidic residues. The interval 564–601 (SIFNKDKNNKRRFSDNRLNKSSSIKNETKSSFFRRKSV) is disordered. Positions 582–594 (NKSSSIKNETKSS) are enriched in polar residues.

It belongs to the DEAD box helicase family. DeaD/CsdA subfamily.

It localises to the cytoplasm. It carries out the reaction ATP + H2O = ADP + phosphate + H(+). DEAD-box RNA helicase involved in various cellular processes at low temperature, including ribosome biogenesis, mRNA degradation and translation initiation. This is ATP-dependent RNA helicase DeaD from Buchnera aphidicola subsp. Schizaphis graminum (strain Sg).